We begin with the raw amino-acid sequence, 230 residues long: 2,3-bisphosphoglycerate-dependent phosphoglycerate mutase (230 aa).

Substrate is bound by residues 8–15 (RHGESEWN), 21–22 (TG), Arg60, 87–90 (ERHY), Lys98, 114–115 (RR), and 183–184 (GN). His9 functions as the Tele-phosphohistidine intermediate in the catalytic mechanism. Glu87 acts as the Proton donor/acceptor in catalysis.

This sequence belongs to the phosphoglycerate mutase family. BPG-dependent PGAM subfamily.

The enzyme catalyses (2R)-2-phosphoglycerate = (2R)-3-phosphoglycerate. The protein operates within carbohydrate degradation; glycolysis; pyruvate from D-glyceraldehyde 3-phosphate: step 3/5. Functionally, catalyzes the interconversion of 2-phosphoglycerate and 3-phosphoglycerate. This Streptococcus agalactiae serotype Ia (strain ATCC 27591 / A909 / CDC SS700) protein is 2,3-bisphosphoglycerate-dependent phosphoglycerate mutase.